We begin with the raw amino-acid sequence, 183 residues long: UPF0340 protein LCA_1354 (183 aa).

Belongs to the UPF0340 family.

The chain is UPF0340 protein LCA_1354 from Latilactobacillus sakei subsp. sakei (strain 23K) (Lactobacillus sakei subsp. sakei).